A 656-amino-acid chain; its full sequence is Exoribonuclease 2 (656 aa).

The 329-residue stretch at 190–518 folds into the RNB domain; sequence RSDLTKTPFF…LNHRLIKSVL (329 aa). An S1 motif domain is found at 564 to 649; it reads KWRYKAEIFD…ESGQLIGKLA (86 aa).

It belongs to the RNR ribonuclease family. RNase II subfamily.

It localises to the cytoplasm. It catalyses the reaction Exonucleolytic cleavage in the 3'- to 5'-direction to yield nucleoside 5'-phosphates.. Involved in mRNA degradation. Hydrolyzes single-stranded polyribonucleotides processively in the 3' to 5' direction. This is Exoribonuclease 2 from Psychromonas ingrahamii (strain DSM 17664 / CCUG 51855 / 37).